The primary structure comprises 277 residues: Ribosomal RNA small subunit methyltransferase A (277 aa).

6 residues coordinate S-adenosyl-L-methionine: N27, L29, G54, E75, D95, and N118.

This sequence belongs to the class I-like SAM-binding methyltransferase superfamily. rRNA adenine N(6)-methyltransferase family. RsmA subfamily.

It localises to the cytoplasm. It catalyses the reaction adenosine(1518)/adenosine(1519) in 16S rRNA + 4 S-adenosyl-L-methionine = N(6)-dimethyladenosine(1518)/N(6)-dimethyladenosine(1519) in 16S rRNA + 4 S-adenosyl-L-homocysteine + 4 H(+). Specifically dimethylates two adjacent adenosines (A1518 and A1519) in the loop of a conserved hairpin near the 3'-end of 16S rRNA in the 30S particle. May play a critical role in biogenesis of 30S subunits. This Chlamydia muridarum (strain MoPn / Nigg) protein is Ribosomal RNA small subunit methyltransferase A.